A 127-amino-acid polypeptide reads, in one-letter code: Large ribosomal subunit protein bL20 (127 aa).

It belongs to the bacterial ribosomal protein bL20 family.

Its function is as follows. Binds directly to 23S ribosomal RNA and is necessary for the in vitro assembly process of the 50S ribosomal subunit. It is not involved in the protein synthesizing functions of that subunit. In Streptomyces griseus subsp. griseus (strain JCM 4626 / CBS 651.72 / NBRC 13350 / KCC S-0626 / ISP 5235), this protein is Large ribosomal subunit protein bL20.